Here is a 1217-residue protein sequence, read N- to C-terminus: Sterol 3-beta-glucosyltransferase (1217 aa).

One can recognise a GRAM 1 domain in the interval 195–232 (EFVRKYFGISEEETLIGHYTGWLLQEVLIQGNLFITNS). In terms of domain architecture, PH spans 246 to 343 (AVVLCGKLKL…WVKCLKKQLF (98 aa)). Residues 590 to 656 (AKIKDWFNLH…EDIEGYNEIL (67 aa)) form the GRAM 2 domain. Positions 766, 767, 769, 1042, 1072, 1074, 1087, 1090, 1091, 1092, 1111, and 1112 each coordinate UDP-alpha-D-glucose.

The protein belongs to the glycosyltransferase 28 family.

Its subcellular location is the cytoplasm. It is found in the membrane. The enzyme catalyses a sterol + UDP-alpha-D-glucose = a sterol 3-beta-D-glucoside + UDP + H(+). It carries out the reaction ergosterol + UDP-alpha-D-glucose = ergosteryl 3-beta-D-glucoside + UDP + H(+). Functionally, sterol glycosyltransferase responsible for the glycosylation of ergosterol to form ergosterol-glucoside. The chain is Sterol 3-beta-glucosyltransferase from Vanderwaltozyma polyspora (strain ATCC 22028 / DSM 70294 / BCRC 21397 / CBS 2163 / NBRC 10782 / NRRL Y-8283 / UCD 57-17) (Kluyveromyces polysporus).